The chain runs to 740 residues: 1,4-alpha-glucan branching enzyme GlgB (740 aa).

The active-site Nucleophile is the Asp409. Glu462 acts as the Proton donor in catalysis.

It belongs to the glycosyl hydrolase 13 family. GlgB subfamily. In terms of assembly, monomer.

The catalysed reaction is Transfers a segment of a (1-&gt;4)-alpha-D-glucan chain to a primary hydroxy group in a similar glucan chain.. It participates in glycan biosynthesis; glycogen biosynthesis. Catalyzes the formation of the alpha-1,6-glucosidic linkages in glycogen by scission of a 1,4-alpha-linked oligosaccharide from growing alpha-1,4-glucan chains and the subsequent attachment of the oligosaccharide to the alpha-1,6 position. This chain is 1,4-alpha-glucan branching enzyme GlgB, found in Methylococcus capsulatus (strain ATCC 33009 / NCIMB 11132 / Bath).